The sequence spans 499 residues: Maturase K (499 aa).

The protein belongs to the intron maturase 2 family. MatK subfamily.

The protein resides in the plastid. Its subcellular location is the chloroplast. In terms of biological role, usually encoded in the trnK tRNA gene intron. Probably assists in splicing its own and other chloroplast group II introns. The chain is Maturase K from Camellia sinensis (Tea plant).